Here is a 627-residue protein sequence, read N- to C-terminus: tRNA uridine 5-carboxymethylaminomethyl modification enzyme MnmG (627 aa).

14–19 (GAGHAG) lines the FAD pocket. NAD(+) is bound at residue 275–289 (GPRYCPSIEDKVVKF).

The protein belongs to the MnmG family. Homodimer. Heterotetramer of two MnmE and two MnmG subunits. The cofactor is FAD.

It localises to the cytoplasm. NAD-binding protein involved in the addition of a carboxymethylaminomethyl (cmnm) group at the wobble position (U34) of certain tRNAs, forming tRNA-cmnm(5)s(2)U34. This is tRNA uridine 5-carboxymethylaminomethyl modification enzyme MnmG from Lachnoclostridium phytofermentans (strain ATCC 700394 / DSM 18823 / ISDg) (Clostridium phytofermentans).